The following is a 471-amino-acid chain: BRISC complex subunit FAM175B (471 aa).

The 155-residue stretch at 7–161 folds into the MPN domain; it reads LVTISGAALS…THKFRHVFLR (155 aa). Residues 245 to 272 are a coiled coil; that stretch reads ESDLEVAELEKQVHELKIKIATQQLAKR. Residues 343–445 form a disordered region; the sequence is AEKSRRAGRS…FSDAECPISS (103 aa). Low complexity predominate over residues 359–370; it reads NQQQETQNFFTN.

This sequence belongs to the FAM175 family. Abro1 subfamily. In terms of assembly, component of the BRISC complex, at least composed of FAM175B/ABRO1, BRCC3/BRCC36, BABAM2 and BABAM1/NBA1. Within the complex, interacts directly with BRCC3/BRCC36. The heterodimer with BRCC3/BRCC36 assembles into a heterotetramer. The BRISC complex binds polyubiquitin.

The protein localises to the cytoplasm. It localises to the nucleus. Its subcellular location is the cytoskeleton. The protein resides in the spindle pole. Its function is as follows. Component of the BRISC complex that specifically cleaves 'Lys-63'-linked polyubiquitin, leaving the last ubiquitin chain attached to its substrates. Does not have activity by itself, but the catalytic subunit BRCC3/BRCC36 needs to be associated into a heterotetramer with FAM175B for minimal in vitro activity. May act as a central scaffold protein that assembles the various components of the BRISC complex and retains them in the cytoplasm. Plays a role in regulating the onset of apoptosis via its role in modulating 'Lys-63'-linked ubiquitination of target proteins. Required for normal mitotic spindle assembly and microtubule attachment to kinetochores via its role in deubiquitinating numa1. This is BRISC complex subunit FAM175B from Camponotus floridanus (Florida carpenter ant).